A 553-amino-acid chain; its full sequence is Meiotic expression up-regulated protein 18 (553 aa).

The interval 267–305 is disordered; that stretch reads SNETLCSNDSKHRIARLKNEDNTQKPISKKRKSKKASHK. Residues 275–289 show a composition bias toward basic and acidic residues; it reads DSKHRIARLKNEDNT. Positions 293 to 304 are enriched in basic residues; sequence ISKKRKSKKASH.

The polypeptide is Meiotic expression up-regulated protein 18 (meu18) (Schizosaccharomyces pombe (strain 972 / ATCC 24843) (Fission yeast)).